A 113-amino-acid polypeptide reads, in one-letter code: MIPGELLPLEGEIELNAGRETVTLTVANTGDRPIQVGSHFHFYEVNAALNFEREPARGMRLDIPAGTAVRFEPGDERTVTLVPLAGSREVYGFNARIEGPLDGKGKKAKGKNK.

This sequence belongs to the urease beta subunit family. In terms of assembly, heterotrimer of UreA (gamma), UreB (beta) and UreC (alpha) subunits. Three heterotrimers associate to form the active enzyme.

Its subcellular location is the cytoplasm. It carries out the reaction urea + 2 H2O + H(+) = hydrogencarbonate + 2 NH4(+). Its pathway is nitrogen metabolism; urea degradation; CO(2) and NH(3) from urea (urease route): step 1/1. This chain is Urease subunit beta, found in Cyanothece sp. (strain PCC 7425 / ATCC 29141).